Consider the following 751-residue polypeptide: SKI family transcriptional corepressor 1 homolog-B (751 aa).

5 disordered regions span residues 1–30 (MESIPNQLPAGRDSSCSPNSKDLQSYSGPP), 234–267 (SRKRTLPIGRSESSPSQPPRGQTQGEPSDVPHKT), 386–434 (LDVS…GIPP), 459–569 (YGNR…HGNK), and 600–635 (QRETSVKDVHEEEPSSTVEEMEPKNHQDENNISEER). Polar residues-rich tracts occupy residues 14 to 27 (SSCSPNSKDLQSYS) and 244 to 259 (SESSPSQPPRGQTQGE). Over residues 416-428 (RNEEDKSGDESRS) the composition is skewed to basic and acidic residues. Low complexity predominate over residues 479–491 (SESSSYRSVSPDV). Residues 539–558 (QENTQMHTLNDLHSTNSSET) are compositionally biased toward polar residues. Basic and acidic residues-rich tracts occupy residues 559–569 (RPSDMESHGNK), 603–612 (TSVKDVHEEE), and 620–635 (MEPKNHQDENNISEER). Positions 666 to 704 (SMAKEELQKQLVEQVELRKKLEREFQNLKDSFQDQMKRE) form a coiled coil.

It belongs to the SKI family.

Its subcellular location is the nucleus. In terms of biological role, may inhibit BMP signaling. The sequence is that of SKI family transcriptional corepressor 1 homolog-B (skor1b) from Danio rerio (Zebrafish).